The chain runs to 178 residues: Cytochrome b6-f complex iron-sulfur subunit (178 aa).

Residues 20 to 42 (LLTFGSVTGVALGALYPVVNYFI) traverse the membrane as a helical segment. The region spanning 65–161 (ASGWLADHKE…VNVENDNVFV (97 aa)) is the Rieske domain. The [2Fe-2S] cluster site is built by Cys107, His109, Cys125, and His128. Cysteines 112 and 127 form a disulfide.

This sequence belongs to the Rieske iron-sulfur protein family. As to quaternary structure, the 4 large subunits of the cytochrome b6-f complex are cytochrome b6, subunit IV (17 kDa polypeptide, PetD), cytochrome f and the Rieske protein, while the 4 small subunits are PetG, PetL, PetM and PetN. The complex functions as a dimer. The cofactor is [2Fe-2S] cluster.

The protein localises to the cellular thylakoid membrane. The catalysed reaction is 2 oxidized [plastocyanin] + a plastoquinol + 2 H(+)(in) = 2 reduced [plastocyanin] + a plastoquinone + 4 H(+)(out). Component of the cytochrome b6-f complex, which mediates electron transfer between photosystem II (PSII) and photosystem I (PSI), cyclic electron flow around PSI, and state transitions. This is Cytochrome b6-f complex iron-sulfur subunit from Synechococcus sp. (strain RCC307).